Reading from the N-terminus, the 299-residue chain is Homeobox protein Nkx-2.5 (299 aa).

The segment covering 90–119 (KDPKDHKKDICPLQKTLEHDKREAEDPERP) has biased composition (basic and acidic residues). Residues 90–128 (KDPKDHKKDICPLQKTLEHDKREAEDPERPRQRKRRKPR) are disordered. The homeobox DNA-binding region spans 124 to 183 (RRKPRVLFSQAQVYELERRFKQQKYLSAPERDHLANVLKLTSTQVKIWFQNRRYKCKRQR).

The protein belongs to the NK-2 homeobox family. As to quaternary structure, homodimer (via the homeobox); binds DNA as homodimer. In terms of tissue distribution, heart and gut tissue.

The protein resides in the nucleus. In terms of biological role, transcription factor required for the development of the heart and the spleen. Implicated in commitment to and/or differentiation of the myocardial lineage. May regulate the expression of genes involved in cardiogenesis and play a role in the formation of gut and the pharyngeal region. Binds to the core DNA motif of promoter. This is Homeobox protein Nkx-2.5 (nkx-2.5) from Xenopus laevis (African clawed frog).